A 27-amino-acid polypeptide reads, in one-letter code: SKSSSPCFGGKLDRIGSYSGLGCNSRK.

C7 and C23 are disulfide-bonded.

It belongs to the natriuretic peptide family.

The protein localises to the secreted. In terms of biological role, hormone playing a key role in cardiovascular homeostasis through regulation of natriuresis, diuresis, and vasodilation. Has a cGMP-stimulating activity. This chain is Natriuretic peptides A (nppa), found in Anguilla japonica (Japanese eel).